Consider the following 213-residue polypeptide: Thymidylate kinase (213 aa).

7–14 (GMDGSGKT) serves as a coordination point for ATP.

This sequence belongs to the thymidylate kinase family.

The catalysed reaction is dTMP + ATP = dTDP + ADP. In terms of biological role, phosphorylation of dTMP to form dTDP in both de novo and salvage pathways of dTTP synthesis. This is Thymidylate kinase from Mycoplasma capricolum subsp. capricolum (strain California kid / ATCC 27343 / NCTC 10154).